A 269-amino-acid polypeptide reads, in one-letter code: tRNA uridine(34) hydroxylase (269 aa).

Residues 122–216 (QDPEVVLIDV…YLEAIAPEEN (95 aa)) enclose the Rhodanese domain. Cys-176 functions as the Cysteine persulfide intermediate in the catalytic mechanism.

This sequence belongs to the TrhO family.

The enzyme catalyses uridine(34) in tRNA + AH2 + O2 = 5-hydroxyuridine(34) in tRNA + A + H2O. Its function is as follows. Catalyzes oxygen-dependent 5-hydroxyuridine (ho5U) modification at position 34 in tRNAs. This chain is tRNA uridine(34) hydroxylase, found in Synechococcus elongatus (strain ATCC 33912 / PCC 7942 / FACHB-805) (Anacystis nidulans R2).